Reading from the N-terminus, the 444-residue chain is Adenylosuccinate synthetase (444 aa).

Residues 12–18 (GDEGKGK) and 40–42 (GHT) each bind GTP. Asp-13 serves as the catalytic Proton acceptor. Mg(2+) is bound by residues Asp-13 and Gly-40. Residues 13–16 (DEGK), 38–41 (NAGH), Thr-128, Arg-142, Gln-223, Thr-238, and Arg-302 contribute to the IMP site. The active-site Proton donor is His-41. 298–304 (TTTGRRR) serves as a coordination point for substrate. GTP-binding positions include Arg-304, 330 to 332 (KLD), and 412 to 414 (SLG).

Belongs to the adenylosuccinate synthetase family. Homodimer. It depends on Mg(2+) as a cofactor.

The protein resides in the cytoplasm. It carries out the reaction IMP + L-aspartate + GTP = N(6)-(1,2-dicarboxyethyl)-AMP + GDP + phosphate + 2 H(+). It functions in the pathway purine metabolism; AMP biosynthesis via de novo pathway; AMP from IMP: step 1/2. Its function is as follows. Plays an important role in the de novo pathway of purine nucleotide biosynthesis. Catalyzes the first committed step in the biosynthesis of AMP from IMP. The sequence is that of Adenylosuccinate synthetase from Synechococcus sp. (strain ATCC 27144 / PCC 6301 / SAUG 1402/1) (Anacystis nidulans).